The primary structure comprises 142 residues: Large ribosomal subunit protein uL13 (142 aa).

The protein belongs to the universal ribosomal protein uL13 family. In terms of assembly, part of the 50S ribosomal subunit.

This protein is one of the early assembly proteins of the 50S ribosomal subunit, although it is not seen to bind rRNA by itself. It is important during the early stages of 50S assembly. In Treponema pallidum (strain Nichols), this protein is Large ribosomal subunit protein uL13.